The following is a 150-amino-acid chain: D-aminoacyl-tRNA deacylase (150 aa).

Residues 138–139 (GP) carry the Gly-cisPro motif, important for rejection of L-amino acids motif.

The protein belongs to the DTD family. Homodimer.

The protein resides in the cytoplasm. It catalyses the reaction glycyl-tRNA(Ala) + H2O = tRNA(Ala) + glycine + H(+). The catalysed reaction is a D-aminoacyl-tRNA + H2O = a tRNA + a D-alpha-amino acid + H(+). Its function is as follows. An aminoacyl-tRNA editing enzyme that deacylates mischarged D-aminoacyl-tRNAs. Also deacylates mischarged glycyl-tRNA(Ala), protecting cells against glycine mischarging by AlaRS. Acts via tRNA-based rather than protein-based catalysis; rejects L-amino acids rather than detecting D-amino acids in the active site. By recycling D-aminoacyl-tRNA to D-amino acids and free tRNA molecules, this enzyme counteracts the toxicity associated with the formation of D-aminoacyl-tRNA entities in vivo and helps enforce protein L-homochirality. This is D-aminoacyl-tRNA deacylase from Azobacteroides pseudotrichonymphae genomovar. CFP2.